The following is a 364-amino-acid chain: Histidinol-phosphate aminotransferase 1 (364 aa).

An N6-(pyridoxal phosphate)lysine modification is found at K211.

Belongs to the class-II pyridoxal-phosphate-dependent aminotransferase family. Histidinol-phosphate aminotransferase subfamily. As to quaternary structure, homodimer. Pyridoxal 5'-phosphate is required as a cofactor.

It catalyses the reaction L-histidinol phosphate + 2-oxoglutarate = 3-(imidazol-4-yl)-2-oxopropyl phosphate + L-glutamate. Its pathway is amino-acid biosynthesis; L-histidine biosynthesis; L-histidine from 5-phospho-alpha-D-ribose 1-diphosphate: step 7/9. The polypeptide is Histidinol-phosphate aminotransferase 1 (Legionella pneumophila subsp. pneumophila (strain Philadelphia 1 / ATCC 33152 / DSM 7513)).